The sequence spans 269 residues: tRNA pseudouridine synthase A (269 aa).

The active-site Nucleophile is aspartate 51. Tyrosine 109 lines the substrate pocket.

Belongs to the tRNA pseudouridine synthase TruA family. In terms of assembly, homodimer.

It catalyses the reaction uridine(38/39/40) in tRNA = pseudouridine(38/39/40) in tRNA. Formation of pseudouridine at positions 38, 39 and 40 in the anticodon stem and loop of transfer RNAs. The sequence is that of tRNA pseudouridine synthase A from Haemophilus influenzae (strain PittGG).